We begin with the raw amino-acid sequence, 2593 residues long: Citrinin polyketide synthase (2593 aa).

An N-terminal acylcarrier protein transacylase domain (SAT) region spans residues 70 to 224 (KLLENLNAWI…YVSVIVDQRR (155 aa)). The active-site Nucleophile; for transacylase activity is the C139. H258 (proton donor/acceptor; for transacylase activity) is an active-site residue. The Ketosynthase family 3 (KS3) domain maps to 391 to 806 (DERIAVIGMA…GSNASMVVTQ (416 aa)). Residues C555, H690, and H729 each act as for beta-ketoacyl synthase activity in the active site. Positions 906–1191 (PDPKPVILCF…VAIWLEAGSN (286 aa)) are malonyl-CoA:ACP transacylase (MAT) domain. Residues 1291–1424 (PKGLTTFVGY…GTITFQAADS (134 aa)) form an N-terminal hotdog fold region. Residues 1291 to 1603 (PKGLTTFVGY…YQKVSISGIR (313 aa)) form the PKS/mFAS DH domain. The segment at 1322–1601 (LLSGHIMANA…ISYQKVSISG (280 aa)) is product template (PT) domain. H1326 functions as the Proton acceptor; for dehydratase activity in the catalytic mechanism. The interval 1451–1603 (VADDILQGRN…YQKVSISGIR (153 aa)) is C-terminal hotdog fold. D1508 serves as the catalytic Proton donor; for dehydratase activity. Residues 1636-1662 (VADSPLVDGSSTAVSGTPPTKKAPKAP) are disordered. The Carrier domain maps to 1661 to 1738 (APSVDITGKM…SLVECMQRIL (78 aa)). The residue at position 1689 (S1689) is an O-(pantetheine 4'-phosphoryl)serine. Residues Y1955, H2067, and E2093 each act as for methyltransferase activity in the active site. A methyltransferase (CMeT) domain region spans residues 1960–2134 (INAVWIQQAE…ATHWKKILTS (175 aa)). The tract at residues 2215-2459 (PAPTGHCVLV…KALPDFDGSL (245 aa)) is NADPH-binding (R) domain.

Pantetheine 4'-phosphate serves as cofactor.

It functions in the pathway mycotoxin biosynthesis. In terms of biological role, non-reducing polyketide synthase; part of the gene cluster that mediates the biosynthesis of the mycotoxin citrinin, a hepato-nephrotoxic compound to humans due to inhibition of respiration complex III. The pathway begins with the synthesis of a keto-aldehyde intermediate by the citrinin PKS (pksCT) from successive condensations of 4 malonyl-CoA units, presumably with a simple acetyl-CoA starter unit. Release of the keto-aldehyde intermediate is consistent with the presence of the C-terminal reductive release domain. Mp11 collaborates with pksCT by catalyzing the hydrolysis of ACP-bound acyl intermediates to free the ACP from stalled intermediates. Mpl2 then catalyzes the oxidation of the C-12 methyl of the ketone intermediate to an alcohol intermediate which is further oxidized by the oxidoreductase mpl7 to produce a bisaldehyde intermediate. The fourth catalytic step is catalyzed by the mpl4 aldehyde dehydrogenase. The final transformation is the reduction of C-3 by mpl6 to provide the chemically stable citrinin nucleus. The polypeptide is Citrinin polyketide synthase (Monascus purpureus (Red mold)).